Consider the following 172-residue polypeptide: Odorant-binding protein (172 aa).

An N-terminal signal peptide occupies residues 1–15; it reads MVKFLLIVLALGVSC. Cystine bridges form between cysteine 60-cysteine 64 and cysteine 79-cysteine 170.

Belongs to the calycin superfamily. Lipocalin family. In terms of assembly, homodimer.

It is found in the secreted. In terms of biological role, this protein is found in nasal epithelium and it binds a wide variety of chemical odorants. This Rattus norvegicus (Rat) protein is Odorant-binding protein (Obp1f).